The following is a 91-amino-acid chain: uncharacterized protein (91 aa).

Positions 1 to 91 constitute an Integrase catalytic domain; it reads MLTFWHWKWL…YQNILRENGI (91 aa).

This is an uncharacterized protein from Haemophilus influenzae (strain ATCC 51907 / DSM 11121 / KW20 / Rd).